Consider the following 305-residue polypeptide: Ribonuclease BN (305 aa).

Positions 64, 66, 68, 69, 141, 212, and 270 each coordinate Zn(2+). Catalysis depends on Asp-68, which acts as the Proton acceptor.

Belongs to the RNase Z family. RNase BN subfamily. Homodimer. Requires Zn(2+) as cofactor.

In terms of biological role, zinc phosphodiesterase, which has both exoribonuclease and endoribonuclease activities. The chain is Ribonuclease BN from Salmonella agona (strain SL483).